Here is a 119-residue protein sequence, read N- to C-terminus: Large ribosomal subunit protein bL20 (119 aa).

This sequence belongs to the bacterial ribosomal protein bL20 family.

In terms of biological role, binds directly to 23S ribosomal RNA and is necessary for the in vitro assembly process of the 50S ribosomal subunit. It is not involved in the protein synthesizing functions of that subunit. The protein is Large ribosomal subunit protein bL20 of Chloroflexus aggregans (strain MD-66 / DSM 9485).